The chain runs to 344 residues: MSQSLFSLAFGVGTQNRQDAWLEVFYALPLLNPSAEIVAAVAPILGYSSGNQALAFTSQQAYQLADALKGIDAAQSALLSRLAESQKPLVATLLAEDAAPSSTPEAYLKLHLLSHRLVKPHGVNLSGIFPLLPNVAWTNIGAVDLAELAELQLEARLKGKLLEVFSVDKFPKMTDYVVPAGVRIADTARVRLGAYIGEGTTVMHEGFVNFNAGTEGPGMIEGRVSAGVFVGKGSDLGGGCSTMGTLSGGGNIVISVGEGCLIGANAGIGIPLGDRNIVEAGLYITAGTKVALLDEQNTLVKVVKARDLAGQPDLLFRRNSQNGAVECKTNKTAIELNEALHAHN.

A Mg(2+)-binding site is contributed by Glu-205. Catalysis depends on Glu-221, which acts as the Acyl-anhydride intermediate. Residues Arg-223, Gly-238, Ser-241, Ala-264, 279–280 (EA), Gly-287, Lys-304, and 317–320 (RRNS) each bind succinyl-CoA.

The protein belongs to the type 2 tetrahydrodipicolinate N-succinyltransferase family. Homotrimer.

Its subcellular location is the cytoplasm. The catalysed reaction is (S)-2,3,4,5-tetrahydrodipicolinate + succinyl-CoA + H2O = (S)-2-succinylamino-6-oxoheptanedioate + CoA. It functions in the pathway amino-acid biosynthesis; L-lysine biosynthesis via DAP pathway; LL-2,6-diaminopimelate from (S)-tetrahydrodipicolinate (succinylase route): step 1/3. Functionally, catalyzes the conversion of the cyclic tetrahydrodipicolinate (THDP) into the acyclic N-succinyl-L-2-amino-6-oxopimelate using succinyl-CoA. The protein is 2,3,4,5-tetrahydropyridine-2,6-dicarboxylate N-succinyltransferase of Pseudomonas paraeruginosa (strain DSM 24068 / PA7) (Pseudomonas aeruginosa (strain PA7)).